The following is a 69-amino-acid chain: Pleurain-A4 (69 aa).

The signal sequence occupies residues 1–22; that stretch reads MFTLKKTLLLLFFLGTISISLC. Positions 23 to 43 are excised as a propeptide; it reads KQERDADEDDGRKMTEEEVKR. An intrachain disulfide couples cysteine 63 to cysteine 69.

The protein belongs to the frog skin active peptide (FSAP) family. Pleurain subfamily. Expressed by the skin glands.

The protein resides in the secreted. Its function is as follows. Antimicrobial peptide. Has activity against Gram-positive and -negative bacteria, and fungi. Has little hemolytic activity on red blood cells. In Nidirana pleuraden (Yunnan pond frog), this protein is Pleurain-A4.